We begin with the raw amino-acid sequence, 119 residues long: Toxin ICK-8 (119 aa).

An N-terminal signal peptide occupies residues 1 to 19 (MMKLYSLVIIATLAAAAFA). 4 disulfides stabilise this stretch: Cys-59–Cys-74, Cys-67–Cys-80, Cys-71–Cys-116, and Cys-73–Cys-87.

The protein belongs to the neurotoxin 25 family. ICK-8 subfamily. Expressed by the venom gland.

The protein localises to the secreted. Its function is as follows. Ion channel inhibitor. This is Toxin ICK-8 from Trittame loki (Brush-footed trapdoor spider).